Here is a 1198-residue protein sequence, read N- to C-terminus: Structural polyprotein (1198 aa).

The interaction with host EXOC1 stretch occupies residues 2 to 15; the sequence is TKKPGGPGKNRAIN. Topologically, residues 2-109 are cytoplasmic; sequence TKKPGGPGKN…RKQNKRGGNE (108 aa). The segment at 37-72 is hydrophobic; homodimerization of capsid protein C; it reads LLDGRGPVRFVLALITFFKFTALAPTKALLGRWKAV. A propeptide spans 106-127 (ER anchor for the capsid protein C, removed in mature form by serine protease NS3); it reads GGNEGSIMWLASLAVVIAYAGA. Residues 110-130 form a helical membrane-spanning segment; that stretch reads GSIMWLASLAVVIAYAGAMKL. The Extracellular portion of the chain corresponds to 131–253; that stretch reads SNFQGKLLMT…ATRYLMKTEN (123 aa). Asn142 carries an N-linked (GlcNAc...) asparagine; by host glycan. The helical transmembrane segment at 254–274 threads the bilayer; it reads WIIRNPGYAFLAATLGWMLGS. Over 275–279 the chain is Cytoplasmic; it reads NNGQR. The helical transmembrane segment at 280–294 threads the bilayer; it reads VVFTILLLLVAPAYS. Topologically, residues 295–746 are extracellular; that stretch reads FNCLGMGNRD…QVFGGAFRTL (452 aa). Cystine bridges form between Cys297/Cys324, Cys354/Cys410, Cys354/Cys415, Cys368/Cys399, Cys386/Cys410, and Cys386/Cys415. The segment at 392 to 405 is fusion peptide; it reads DRGWGNGCGLFGKG. Asn448 carries an N-linked (GlcNAc...) asparagine; by host glycan. 2 disulfide bridges follow: Cys484/Cys581 and Cys598/Cys629. Residues 747-767 form a helical membrane-spanning segment; sequence FGGMSWITQGLMGALLLWMGV. The Cytoplasmic segment spans residues 768–773; it reads NARDRS. A helical transmembrane segment spans residues 774–794; that stretch reads IALAFLATGGVLVFLATNVHA. At 795-1198 the chain is on the extracellular side; the sequence is DTGCAIDITR…CADAWGHHLH (404 aa). Cystine bridges form between Cys798/Cys809, Cys849/Cys937, Cys973/Cys1017, Cys1074/Cys1123, Cys1085/Cys1106, and Cys1107/Cys1110. N-linked (GlcNAc...) asparagine; by host glycans are attached at residues Asn924 and Asn1001. Residues 1152 to 1177 are disordered; the sequence is VDPFSAGPSGDVSGHPGGPSQEVDGQ.

Homodimer. Interacts (via N-terminus) with host EXOC1 (via C-terminus); this interaction results in EXOC1 degradation through the proteasome degradation pathway. Interacts with host CAPRIN1; this interaction is involved in the suppression of the integrated stress response. As to quaternary structure, forms heterodimers with envelope protein E in the endoplasmic reticulum and Golgi. In terms of assembly, homodimer; in the endoplasmic reticulum and Golgi. Interacts with protein prM. Interacts with non-structural protein 1. Genome polyprotein: Specific enzymatic cleavages in vivo yield mature proteins. Cleavages in the lumen of endoplasmic reticulum are performed by host signal peptidase, whereas cleavages in the cytoplasmic side are performed by serine protease NS3. Signal cleavage at the 2K-4B site requires a prior NS3 protease-mediated cleavage at the 4A-2K site. In terms of processing, cleaved in post-Golgi vesicles by a host furin, releasing the mature small envelope protein M, and peptide pr. This cleavage is incomplete as up to 30% of viral particles still carry uncleaved prM. Post-translationally, N-glycosylated.

Its subcellular location is the secreted. The protein resides in the virion membrane. It localises to the host endoplasmic reticulum membrane. Plays a role in virus budding by binding to the cell membrane and gathering the viral RNA into a nucleocapsid that forms the core of a mature virus particle. During virus entry, may induce genome penetration into the host cytoplasm after hemifusion induced by the surface proteins. Can migrate to the cell nucleus where it modulates host functions. Overcomes the anti-viral effects of host EXOC1 by sequestering and degrading the latter through the proteasome degradation pathway. Inhibits the integrated stress response (ISR) in the infected cell by binding to host CAPRIN1. Its function is as follows. Inhibits RNA silencing by interfering with host Dicer. Functionally, prevents premature fusion activity of envelope proteins in trans-Golgi by binding to envelope protein E at pH6.0. After virion release in extracellular space, gets dissociated from E dimers. In terms of biological role, acts as a chaperone for envelope protein E during intracellular virion assembly by masking and inactivating envelope protein E fusion peptide. prM is the only viral peptide matured by host furin in the trans-Golgi network probably to avoid catastrophic activation of the viral fusion activity in acidic Golgi compartment prior to virion release. prM-E cleavage is inefficient, and many virions are only partially matured. These uncleaved prM would play a role in immune evasion. May play a role in virus budding. Exerts cytotoxic effects by activating a mitochondrial apoptotic pathway through M ectodomain. May display a viroporin activity. Its function is as follows. Binds to host cell surface receptor and mediates fusion between viral and cellular membranes. Envelope protein is synthesized in the endoplasmic reticulum in the form of heterodimer with protein prM. They play a role in virion budding in the ER, and the newly formed immature particle is covered with 60 spikes composed of heterodimer between precursor prM and envelope protein E. The virion is transported to the Golgi apparatus where the low pH causes dissociation of PrM-E heterodimers and formation of E homodimers. prM-E cleavage is inefficient, and many virions are only partially matured. These uncleaved prM would play a role in immune evasion. Functionally, may play a role in neuroinvasiveness. This is Structural polyprotein from Japanese encephalitis virus (strain Jaoars982) (JEV).